We begin with the raw amino-acid sequence, 195 residues long: dTTP/UTP pyrophosphatase (195 aa).

Catalysis depends on D76, which acts as the Proton acceptor.

It belongs to the Maf family. YhdE subfamily. Requires a divalent metal cation as cofactor.

The protein resides in the cytoplasm. The enzyme catalyses dTTP + H2O = dTMP + diphosphate + H(+). It catalyses the reaction UTP + H2O = UMP + diphosphate + H(+). In terms of biological role, nucleoside triphosphate pyrophosphatase that hydrolyzes dTTP and UTP. May have a dual role in cell division arrest and in preventing the incorporation of modified nucleotides into cellular nucleic acids. The protein is dTTP/UTP pyrophosphatase of Shewanella frigidimarina (strain NCIMB 400).